We begin with the raw amino-acid sequence, 169 residues long: MDKLDIVLYPDEGLREVCKPVPEMTDELDKLIDEMFYTMYDAPGIGLAAPQVAVQQRLIVVDISETKDEPIALLNPEIIKTAGKITWEEGCLSIPGIYAKVDRPSDILVRGMDRDGKTIEFEANELLAVCIQHEIDHLNGKLFIDHLSGLKRTRAIQKFKKEMAEQANS.

Cysteine 91 and histidine 133 together coordinate Fe cation. Glutamate 134 is a catalytic residue. Residue histidine 137 coordinates Fe cation.

The protein belongs to the polypeptide deformylase family. Fe(2+) serves as cofactor.

The enzyme catalyses N-terminal N-formyl-L-methionyl-[peptide] + H2O = N-terminal L-methionyl-[peptide] + formate. Functionally, removes the formyl group from the N-terminal Met of newly synthesized proteins. Requires at least a dipeptide for an efficient rate of reaction. N-terminal L-methionine is a prerequisite for activity but the enzyme has broad specificity at other positions. This Hydrogenovibrio crunogenus (strain DSM 25203 / XCL-2) (Thiomicrospira crunogena) protein is Peptide deformylase.